The sequence spans 274 residues: Eukaryotic translation initiation factor 3 subunit G (274 aa).

Phosphoserine occurs at positions 146, 164, and 171. The disordered stretch occupies residues 149 to 170 (ANTSAAATPEPDTDASGKYVPP). The 80-residue stretch at 191–270 (TTLKISQLNT…LILHLEWPKK (80 aa)) folds into the RRM domain.

Belongs to the eIF-3 subunit G family. As to quaternary structure, component of the eukaryotic translation initiation factor 3 (eIF-3) complex.

The protein resides in the cytoplasm. Functionally, RNA-binding component of the eukaryotic translation initiation factor 3 (eIF-3) complex, which is involved in protein synthesis of a specialized repertoire of mRNAs and, together with other initiation factors, stimulates binding of mRNA and methionyl-tRNAi to the 40S ribosome. The eIF-3 complex specifically targets and initiates translation of a subset of mRNAs involved in cell proliferation. This subunit can bind 18S rRNA. The chain is Eukaryotic translation initiation factor 3 subunit G from Meyerozyma guilliermondii (strain ATCC 6260 / CBS 566 / DSM 6381 / JCM 1539 / NBRC 10279 / NRRL Y-324) (Yeast).